The chain runs to 192 residues: Adenylate kinase (192 aa).

10–18 (GVPGVGSTT) is an ATP binding site.

It belongs to the archaeal adenylate kinase family. Monomer.

The protein resides in the cytoplasm. It catalyses the reaction AMP + ATP = 2 ADP. This Methanococcus vannielii (strain ATCC 35089 / DSM 1224 / JCM 13029 / OCM 148 / SB) protein is Adenylate kinase.